The sequence spans 1765 residues: RANBP2-like and GRIP domain-containing protein 5/6 (1765 aa).

The residue at position 19 (Thr-19) is a Phosphothreonine. Ser-21 is subject to Phosphoserine. 3 TPR repeats span residues 26–59 (SMKG…QERD), 60–93 (PKAH…NPTQ), and 648–681 (EDAH…VSYW). 2 disordered regions span residues 760 to 804 (GPLY…PRWT) and 924 to 945 (FGIS…NDTG). The span at 778-797 (STPSPTKYSLSPSKSYKYSP) shows a compositional bias: low complexity. Over residues 931-941 (NQEKKREKPLE) the composition is skewed to basic and acidic residues. One can recognise a RanBD1 1 domain in the interval 1036-1172 (HFEPVVQMPE…FEECQRLLLD (137 aa)). Disordered stretches follow at residues 1214-1247 (KVTE…PTLE) and 1306-1330 (AKLN…EERD). Polar residues predominate over residues 1235–1244 (IKPNAENTGP). The segment covering 1317-1329 (TDEESVVTQEEER) has biased composition (acidic residues). The 137-residue stretch at 1333 to 1469 (YFEPVVPLPD…FDEAKTAQEK (137 aa)) folds into the RanBD1 2 domain. Residues 1580 to 1593 (NNSETSSVAQSGSE) show a composition bias toward polar residues. Residues 1580 to 1621 (NNSETSSVAQSGSESKVEPKKCELSKNSDIEQSSDSKVKNLS) form a disordered region. Over residues 1594 to 1617 (SKVEPKKCELSKNSDIEQSSDSKV) the composition is skewed to basic and acidic residues. A GRIP domain is found at 1702–1752 (REKSAANLEYLKNVLLQFIFLKPGSERERLLPVINTMLQLSPEEKGKLAAV).

Expressed in testis.

The protein resides in the cytoplasm. This is RANBP2-like and GRIP domain-containing protein 5/6 (RGPD5) from Homo sapiens (Human).